The chain runs to 1688 residues: Voltage-dependent L-type calcium channel subunit alpha-1S (1688 aa).

Residues 1–24 (MDAMGSAAEEGTQKKKRRPLVPPP) form a disordered region. Residues 1–51 (MDAMGSAAEEGTQKKKRRPLVPPPPRPPRALFCLGLQNPFRKFCINIVEWK) are Cytoplasmic-facing. The I repeat unit spans residues 38-335 (NPFRKFCINI…LVLGVLSGEF (298 aa)). The helical transmembrane segment at 52–70 (PFEMIILLTIFANCVALAI) threads the bilayer. At 71–88 (FLPMPEDDTNSTNSVLEK) the chain is on the extracellular side. Residue asparagine 80 is glycosylated (N-linked (GlcNAc...) asparagine). A helical transmembrane segment spans residues 89–108 (VEYIFLFIFTIESFLKIVAY). At 109–120 (GFILHTDAYLRN) the chain is on the cytoplasmic side. The helical transmembrane segment at 121–139 (GWNILDFTIVSVGVFSVLL) threads the bilayer. Over 140–158 (EQISKLQGLPAPGKSSGFN) the chain is Extracellular. A helical membrane pass occupies residues 159–177 (VKALRAFRVLRPLRLVSGV). Over 178–196 (PSLQVVLNSIIKAMIPLLH) the chain is Cytoplasmic. The helical transmembrane segment at 197–216 (IALLVLFMIIIYAIVGLELF) threads the bilayer. Residues 217–307 (SGKMHKTCYF…WVNDAIGNEW (91 aa)) lie on the Extracellular side of the membrane. Asparagine 255 carries N-linked (GlcNAc...) asparagine glycosylation. Glutamate 290 is a Ca(2+) binding site. Residues 308–332 (PWIYFVSLILLGSFFVLNLVLGVLS) form a helical membrane-spanning segment. Over 333–431 (GEFTKEREKA…RKSRDLVKSR (99 aa)) the chain is Cytoplasmic. The interval 355 to 372 (QAMDEDLRGYLDWITHAE) is binding to the beta subunit. Residues 417 to 663 (HRLLRRKSRD…VFLAIAVDNL (247 aa)) form an II repeat. The chain crosses the membrane as a helical span at residues 432–450 (FFYWLVIIIILLNTVIIAT). Over 451–465 (EHHHQPDSLTKAQDI) the chain is Extracellular. The chain crosses the membrane as a helical span at residues 466–485 (ANEVLLALFTMEMIVKIYAL). Residues 486–493 (GFQSYFMS) lie on the Cytoplasmic side of the membrane. A helical membrane pass occupies residues 494–512 (LFNRFDSFVVCTGLLEVML). The Extracellular segment spans residues 513–522 (VASDIMSPLG). The helical transmembrane segment at 523 to 541 (ISVLRCIRLLRIFKITRYW) threads the bilayer. The Cytoplasmic segment spans residues 542-560 (TSLNNLVASLLNSVRSIAS). The helical transmembrane segment at 561-580 (LLLLLFLFMIIFALLGMQMF) threads the bilayer. The Extracellular segment spans residues 581 to 635 (GGKFDFEDLEVRRSTFDTFPQALITVFQILTGEDWTAVMYNGIMAYGGPTYSGMS). A Ca(2+)-binding site is contributed by glutamate 613. The helical transmembrane segment at 636–660 (VCIYFIILFVCGNYILLNVFLAIAV) threads the bilayer. Residues 661–797 (DNLAEAENLT…VLCHRIINAT (137 aa)) lie on the Cytoplasmic side of the membrane. Disordered stretches follow at residues 672 to 696 (AQKAKAEERKRKKLARANPDKTEEE) and 729 to 755 (EIKDPYPSADFPGDDEEEEPEIPISPR). The segment covering 740-749 (PGDDEEEEPE) has biased composition (acidic residues). The stretch at 784 to 1066 (NKIRVLCHRI…IFVGFVIVTF (283 aa)) is one III repeat. Residues 798 to 816 (TFTNFILLFILLSSISLAA) form a helical membrane-spanning segment. At 817–832 (EDPIQPESFRNKVLSK) the chain is on the extracellular side. A helical transmembrane segment spans residues 833–852 (LDIVFTVIFTTEIVLKMTAY). Residues 853–864 (GAFLHKGSFCRN) are Cytoplasmic-facing. A helical membrane pass occupies residues 865 to 883 (SFNILDLSVVGVSLISMGI). Over 884–890 (ESSAISV) the chain is Extracellular. A helical transmembrane segment spans residues 891–909 (VKILRVLRVLRPLRAINRA). At 910-928 (KGLKHVVQCLFVAIKTIGN) the chain is on the cytoplasmic side. Residues 929-948 (IVLVTTLLQFMFSCIGVQLF) traverse the membrane as a helical segment. Over 949–1038 (KGKFYSCTDT…MGPIYNYRIE (90 aa)) the chain is Extracellular. The tract at residues 986–1075 (RVWSHSDFHF…FQEQGEQEYK (90 aa)) is dihydropyridine binding. Ca(2+) is bound at residue glutamate 1012. Residues 1039–1063 (IAVFFIVYIILIAFFMMNIFVGFVI) traverse the membrane as a helical segment. At 1064–1116 (VTFQEQGEQEYKDCELDKNQRQCVQYALKARPLRRYIPKNPHQYKIWYVVTSS) the chain is on the cytoplasmic side. Residues 1103 to 1371 (NPHQYKIWYV…LFVAVIMDNF (269 aa)) form an IV repeat. Residues 1117-1135 (YFEYLMFFLITLNTISLGM) form a helical membrane-spanning segment. The Extracellular segment spans residues 1136 to 1150 (QHYGQTAEFSYMSDI). The chain crosses the membrane as a helical span at residues 1151 to 1170 (LNVAFTGIFTVEMFLKLAAF). Topologically, residues 1171–1178 (KAKGYFGD) are cytoplasmic. The chain crosses the membrane as a helical span at residues 1179 to 1197 (PWNVFDFLIVIGSVIDVIL). Topologically, residues 1198–1218 (SEIDTPGIPATPGAEESSRIS) are extracellular. A helical membrane pass occupies residues 1219 to 1237 (ITFFRLFRVLRLVKLLSRG). The Cytoplasmic segment spans residues 1238 to 1256 (EGVRTLLWTFIKSFQALPY). Residues 1257-1276 (VALLIVMLFFIYAVIGMQVF) traverse the membrane as a helical segment. At 1277 to 1343 (GKIALVDGTH…GEEYTCGTSF (67 aa)) the chain is on the extracellular side. The dihydropyridine binding stretch occupies residues 1324-1390 (LCDPMSDFQP…LGPHHLDEFK (67 aa)). A phenylalkylamine binding region spans residues 1336 to 1379 (EYTCGTSFAYFYFISFYMLCAFLIINLFVAVIMDNFDYLTRDWS). The chain crosses the membrane as a helical span at residues 1344–1368 (AYFYFISFYMLCAFLIINLFVAVIM). Topologically, residues 1369 to 1688 (DNFDYLTRDW…TNSSISQATN (320 aa)) are cytoplasmic. Disordered stretches follow at residues 1635-1664 (PEPVFFPPPRRNRNTNNSTISRGLDQRLTT) and 1669-1688 (RVQQSEEQWDTNSSISQATN). Positions 1678-1688 (DTNSSISQATN) are enriched in polar residues.

This sequence belongs to the calcium channel alpha-1 subunit (TC 1.A.1.11) family. Multisubunit complex consisting of alpha-1, alpha-2, beta and delta subunits in a 1:1:1:1 ratio. The channel activity is directed by the pore-forming and voltage-sensitive alpha-1 subunit. In many cases, this subunit is sufficient to generate voltage-sensitive calcium channel activity. The auxiliary subunits beta and alpha-2/delta linked by a disulfide bridge regulate the channel activity. An additional gamma subunit is present only in skeletal muscle L-type channel. Post-translationally, phosphorylation by PKA stimulates the calcium channel function. As to expression, skeletal muscle specific.

The protein resides in the membrane. Voltage-sensitive calcium channels (VSCC) mediate the entry of calcium ions into excitable cells and are also involved in a variety of calcium-dependent processes, including muscle contraction, gene expression, cell motility, cell division and cell death. The isoform alpha-1S gives rise to L-type calcium currents. Long-lasting (L-type) calcium channels belong to the 'high-voltage activated' (HVA) group. They are blocked by dihydropyridines (DHP), phenylalkylamines, and by benzothiazepines. Calcium channels containing the alpha-1S subunit play an important role in excitation-contraction coupling in skele|tal muscle. In Aquarana catesbeiana (American bullfrog), this protein is Voltage-dependent L-type calcium channel subunit alpha-1S.